The following is a 287-amino-acid chain: Pyridoxal kinase PdxY (287 aa).

Residues Ser-9 and Thr-44 to Gln-45 each bind substrate. Residues Asp-111, Ala-143, Glu-148, Lys-181, and Arg-208–Val-211 each bind ATP. Asp-223 serves as a coordination point for substrate.

The protein belongs to the pyridoxine kinase family. PdxY subfamily. In terms of assembly, homodimer. Requires Mg(2+) as cofactor.

The enzyme catalyses pyridoxal + ATP = pyridoxal 5'-phosphate + ADP + H(+). Its pathway is cofactor metabolism; pyridoxal 5'-phosphate salvage; pyridoxal 5'-phosphate from pyridoxal: step 1/1. Pyridoxal kinase involved in the salvage pathway of pyridoxal 5'-phosphate (PLP). Catalyzes the phosphorylation of pyridoxal to PLP. The chain is Pyridoxal kinase PdxY from Photorhabdus laumondii subsp. laumondii (strain DSM 15139 / CIP 105565 / TT01) (Photorhabdus luminescens subsp. laumondii).